A 493-amino-acid chain; its full sequence is Transmembrane protein 184 homolog DDB_G0284525 (493 aa).

Over residues 1–10 (MTQESSSSNH) the composition is skewed to polar residues. The segment at 1–25 (MTQESSSSNHYVDESSFDNNNNNNN) is disordered. A run of 7 helical transmembrane segments spans residues 46 to 66 (VPALYAMFALASLFVLLATIL), 87 to 107 (IVRIVFMIPIYAIYSLLSLLL), 119 to 139 (DCYEAYVLYMFFALCVSYGGG), 180 to 200 (YVLVRPAVTLASAIFEIFGLY), 212 to 232 (FYNAFIINVSVTVALYIVVLF), 254 to 274 (IVVFFCFWQSIAISGMTNFGW), and 293 to 313 (FLICFEMFGVAILHQYAFPYE). N-linked (GlcNAc...) asparagine glycosylation is found at Asn415 and Asn416.

Belongs to the TMEM184 family.

The protein localises to the cell membrane. In terms of biological role, probable transporter. This is Transmembrane protein 184 homolog DDB_G0284525 (tmem184A) from Dictyostelium discoideum (Social amoeba).